The chain runs to 451 residues: Mannan endo-1,6-alpha-mannosidase DCW1 (451 aa).

The N-terminal stretch at 1–21 (MLAVTFTAAAVLSLLAASGRT) is a signal peptide. N-linked (GlcNAc...) asparagine glycosylation is found at N84, N109, N203, N242, N267, and N291. The tract at residues 397–419 (AMNGGTSPGDPAAGTKTKAENLP) is disordered. A lipid anchor (GPI-anchor amidated aspartate) is attached at D427. Residues 428-451 (RAGAGIITALIGSSFLACTLWLII) constitute a propeptide, removed in mature form.

It belongs to the glycosyl hydrolase 76 family.

The protein resides in the secreted. It localises to the cell wall. The protein localises to the cell membrane. The enzyme catalyses Random hydrolysis of (1-&gt;6)-alpha-D-mannosidic linkages in unbranched (1-&gt;6)-mannans.. Its function is as follows. Required for normal synthesis of the cell wall. This chain is Mannan endo-1,6-alpha-mannosidase DCW1 (DCW1), found in Eremothecium gossypii (strain ATCC 10895 / CBS 109.51 / FGSC 9923 / NRRL Y-1056) (Yeast).